Here is a 332-residue protein sequence, read N- to C-terminus: Caffeoylshikimate esterase (332 aa).

Over residues 1-13 the composition is skewed to low complexity; it reads MPSEAESSANSAP. Residues 1–26 are disordered; it reads MPSEAESSANSAPATPPPPPNFWGTM. S147 serves as the catalytic Nucleophile. Residues D268 and H298 each act as charge relay system in the active site.

It belongs to the AB hydrolase superfamily. Monoacylglycerol lipase family. Interacts with ACBP2. In terms of tissue distribution, expressed in vasculature of roots and leaves, stems, flowers and siliques.

The protein resides in the cell membrane. It catalyses the reaction 5-O-[(E)-caffeoyl]-shikimate + H2O = shikimate + (E)-caffeate + H(+). In terms of biological role, esterase involved in the biosynthesis of lignin. Hydrolyzes caffeoylshikimate into caffeate and shikimate. Together with 4-coumarate--CoA ligase (4CL), acts on an alternative reaction for the formation of caffeoyl-CoA and bypasses the second reaction of shikimate O-hydroxycinnamoyltransferase (HST). Also accepts 4-coumaroylshikimate as substrate, but with lower activity. According to PubMed:20345607 and PubMed:22915575, possesses monoacylglycerol O-acyltransferase, monoacylglycerol lipase and lysophospholipase activities in vitro. With the association of ACBP2, may promote the degradation of lysophosphatidylcholine and detoxify the peroxidized membrane in response to cadmium-induced oxidative stress. However these results require additional confirmation in vivo. This chain is Caffeoylshikimate esterase (CSE), found in Arabidopsis thaliana (Mouse-ear cress).